A 379-amino-acid polypeptide reads, in one-letter code: Cytochrome b (379 aa).

Helical transmembrane passes span F33–M53, W77–V98, W113–L133, and F178–L198. Positions 83 and 97 each coordinate heme b. 2 residues coordinate heme b: H182 and H196. H201 is a binding site for a ubiquinone. The next 4 helical transmembrane spans lie at I226–S246, L288–H308, L320–G340, and F347–P367.

It belongs to the cytochrome b family. As to quaternary structure, the cytochrome bc1 complex contains 11 subunits: 3 respiratory subunits (MT-CYB, CYC1 and UQCRFS1), 2 core proteins (UQCRC1 and UQCRC2) and 6 low-molecular weight proteins (UQCRH/QCR6, UQCRB/QCR7, UQCRQ/QCR8, UQCR10/QCR9, UQCR11/QCR10 and a cleavage product of UQCRFS1). This cytochrome bc1 complex then forms a dimer. Requires heme b as cofactor.

The protein resides in the mitochondrion inner membrane. Functionally, component of the ubiquinol-cytochrome c reductase complex (complex III or cytochrome b-c1 complex) that is part of the mitochondrial respiratory chain. The b-c1 complex mediates electron transfer from ubiquinol to cytochrome c. Contributes to the generation of a proton gradient across the mitochondrial membrane that is then used for ATP synthesis. The sequence is that of Cytochrome b (MT-CYB) from Chrotogale owstoni (Owston's palm civet).